The following is a 258-amino-acid chain: Tetraspanin-15 (258 aa).

The Cytoplasmic portion of the chain corresponds to 1–20 (MGALGDSAYGARGRLIKFSY). A helical transmembrane segment spans residues 21–41 (IVTALISILFSISCICYGIWL). Over 42 to 62 (LARRSQYAELVSPSLYVDVGR) the chain is Extracellular. Residues 63–83 (ILVIISILSILNYLICFYAIF) form a helical membrane-spanning segment. The Cytoplasmic portion of the chain corresponds to 84–93 (KEMRCFVTSC). Residues 94–114 (AVASIVIAVMLIIGGCIGLNF) form a helical membrane-spanning segment. Residues 115–223 (RDQLTHYTPL…STCYEPLQND (109 aa)) are Extracellular-facing. Residues 224–244 (LLHVMNVASWLCITNAIVQII) form a helical membrane-spanning segment. The Cytoplasmic portion of the chain corresponds to 245 to 258 (PSVAGCWYSKLIRK).

Belongs to the tetraspanin (TM4SF) family. As to quaternary structure, interacts with doxa-1 and bli-3. Expressed in the body wall (hyp7 hypodermal syncitium), pharynx and vulva. Expressed in a punctate pattern along the thick region of the hypodermis.

It localises to the membrane. Functionally, plays a role in cuticle biogenesis. In complex with doxa-1 and the dual oxidase bli-3, promotes the generation of reactive oxygen species (ROS) and tyrosine cross-linking of collagen, thus stabilizing cuticular extracellular matrix. The chain is Tetraspanin-15 from Caenorhabditis elegans.